The following is a 684-amino-acid chain: Calpain-14 (684 aa).

One can recognise a Calpain catalytic domain in the interval 43–336 (LFEDTSFPAT…FVLLVICKLT (294 aa)). Residues C101, H254, and N278 contribute to the active site. The tract at residues 337-503 (PGLLSQEAAQ…KHIFYEIGSN (167 aa)) is domain III. A linker region spans residues 504 to 517 (SGVVFSKEIEDQNE). The tract at residues 518–683 (RQDEFFTKFF…KPEWMMMALY (166 aa)) is domain IV. 3 EF-hand domains span residues 557-592 (FSLEACQGILALLDLNASGTMSIQEFRDLWKQLKLS), 586-621 (WKQLKLSQKVFHKQDRGSGYLNWEQLHAAMREAGIM), and 651-684 (LRVENMEDVFQNLTQDGKGIYLQKPEWMMMALYS). Positions 570, 572, 574, 576, and 581 each coordinate Ca(2+).

The protein belongs to the peptidase C2 family. As to expression, not expressed in tissues tested.

Functionally, calcium-regulated non-lysosomal thiol-protease. This Homo sapiens (Human) protein is Calpain-14 (CAPN14).